Here is a 202-residue protein sequence, read N- to C-terminus: Recombination protein RecR (202 aa).

The segment at 57–72 (CGVCRTFTEQPCCDIC) adopts a C4-type zinc-finger fold. The region spanning 81 to 176 (GQICVVESPS…STTKIAHGVP (96 aa)) is the Toprim domain.

Belongs to the RecR family.

May play a role in DNA repair. It seems to be involved in an RecBC-independent recombinational process of DNA repair. It may act with RecF and RecO. The chain is Recombination protein RecR from Hamiltonella defensa subsp. Acyrthosiphon pisum (strain 5AT).